The following is a 394-amino-acid chain: Glycerol-1-phosphate dehydrogenase [NAD(P)+] (394 aa).

NAD(+)-binding positions include D54, 116–120 (GTIHD), and 138–141 (TAPS). Position 143 (D143) interacts with substrate. S147 is an NAD(+) binding site. Residue D190 participates in substrate binding. Ni(2+) is bound by residues D190 and H270. Position 274 (H274) interacts with substrate. Position 290 (H290) interacts with Ni(2+).

This sequence belongs to the glycerol-1-phosphate dehydrogenase family. Homodimer. The cofactor is Ni(2+).

The protein resides in the cytoplasm. The enzyme catalyses sn-glycerol 1-phosphate + NAD(+) = dihydroxyacetone phosphate + NADH + H(+). It catalyses the reaction sn-glycerol 1-phosphate + NADP(+) = dihydroxyacetone phosphate + NADPH + H(+). Its function is as follows. Catalyzes the NAD(P)H-dependent reduction of dihydroxyacetonephosphate (DHAP or glycerone phosphate) to glycerol 1-phosphate (G1P). The G1P thus generated is probably used for the synthesis of phosphoglycerolipids in Gram-positive bacterial species. This chain is Glycerol-1-phosphate dehydrogenase [NAD(P)+], found in Bacillus velezensis (strain DSM 23117 / BGSC 10A6 / LMG 26770 / FZB42) (Bacillus amyloliquefaciens subsp. plantarum).